The primary structure comprises 351 residues: MNKARYTQDVPEDRIKLLESIASYNKPFTLMVVGGVDSGKSTLITFLGNELLSLGFKVAVVDSDVGQKGVLPPGTISLAIPEGPFESMSELEGVAHYFVGTTAPSQFIGEMAVGVKRMVEIARNVADVVLIDTTGFVTGVGAEMKRLKAELVKPDIIAVIHSGELSGLVKALEPYGGVIELAVSETVKRYPLEERRNLRAEKWRNYFRDSQLVEFSASEVAITGTSLFHGIPLNADENELLEKAFGWLVVAGWKNKGYTVVKADVEKFPRAHSRELKAIDFEKLSNLLVGLIDGEGLCMGVGVLKWINFSEGRLQILTPVRDLSGVREIRFGRIRVTEEGEELGLLRRDEL.

An ATP-binding site is contributed by 34–41; the sequence is GGVDSGKS.

A divalent metal cation is required as a cofactor.

It carries out the reaction a 5'-end dephospho-2'-deoxyribonucleoside-DNA + ATP = a 5'-end 5'-phospho-2'-deoxyribonucleoside-DNA + ADP + H(+). The enzyme catalyses a 5'-end dephospho-ribonucleoside-RNA + ATP = a 5'-end 5'-phospho-ribonucleoside-RNA + ADP + H(+). In terms of biological role, polynucleotide kinase that can phosphorylate the 5'-hydroxyl groups of both single-stranded RNA (ssRNA) and single-stranded DNA (ssDNA). Exhibits a strong preference for ssRNA. This Thermococcus kodakarensis (strain ATCC BAA-918 / JCM 12380 / KOD1) (Pyrococcus kodakaraensis (strain KOD1)) protein is Polyribonucleotide 5'-hydroxyl-kinase TK1956.